The sequence spans 373 residues: T-protein (373 aa).

Residues 1–90 form the Chorismate mutase domain; sequence MVAELTALRD…ESYSSENDKG (90 aa). Positions 99-361 constitute a Prephenate/arogenate dehydrogenase domain; sequence RPVVIVGGGG…DYAQRFQSES (263 aa).

In the C-terminal section; belongs to the prephenate/arogenate dehydrogenase family.

It localises to the cytoplasm. It carries out the reaction chorismate = prephenate. The enzyme catalyses prephenate + NAD(+) = 3-(4-hydroxyphenyl)pyruvate + CO2 + NADH. The protein operates within amino-acid biosynthesis; L-tyrosine biosynthesis; (4-hydroxyphenyl)pyruvate from prephenate (NAD(+) route): step 1/1. It functions in the pathway metabolic intermediate biosynthesis; prephenate biosynthesis; prephenate from chorismate: step 1/1. The sequence is that of T-protein (tyrA) from Escherichia coli (strain K12).